A 497-amino-acid chain; its full sequence is Serine hydroxymethyltransferase, mitochondrial (497 aa).

The N-terminal 27 residues, 1–27 (MFIRRLHTSSRRLTCGEALRACQQTGA), are a transit peptide targeting the mitochondrion. Residue K272 is modified to N6-(pyridoxal phosphate)lysine.

Belongs to the SHMT family. In terms of assembly, homotetramer. Requires pyridoxal 5'-phosphate as cofactor.

The protein localises to the mitochondrion. The catalysed reaction is (6R)-5,10-methylene-5,6,7,8-tetrahydrofolate + glycine + H2O = (6S)-5,6,7,8-tetrahydrofolate + L-serine. The protein operates within one-carbon metabolism; tetrahydrofolate interconversion. In terms of biological role, interconversion of serine and glycine. The chain is Serine hydroxymethyltransferase, mitochondrial (SHM1) from Eremothecium gossypii (strain ATCC 10895 / CBS 109.51 / FGSC 9923 / NRRL Y-1056) (Yeast).